The sequence spans 436 residues: Serine carboxypeptidase-like 15 (436 aa).

A signal peptide spans 1–24; it reads MASWIFKLLLLLQCVLVLIQHADS. Intrachain disulfides connect Cys-83/Cys-326, Cys-247/Cys-261, and Cys-285/Cys-292. Asn-104 carries N-linked (GlcNAc...) asparagine glycosylation. Ser-179 is a catalytic residue. Asn-306 and Asn-345 each carry an N-linked (GlcNAc...) asparagine glycan. Asp-361 is a catalytic residue. Residue Asn-377 is glycosylated (N-linked (GlcNAc...) asparagine). His-414 is an active-site residue.

It belongs to the peptidase S10 family. As to expression, expressed in seedlings and roots.

It is found in the secreted. Probable carboxypeptidase. This Arabidopsis thaliana (Mouse-ear cress) protein is Serine carboxypeptidase-like 15 (SCPL15).